A 275-amino-acid chain; its full sequence is Putative methylglyoxal reductase DkgA (275 aa).

Tyr51 functions as the Proton donor in the catalytic mechanism. Residue His107 coordinates substrate. 187–241 (SPLAQGGEGVFDQKVIRELADKYGKTPAQIVIRWHLDCGLVVIPKSVTPSRIAEN) contacts NADP(+).

Belongs to the aldo/keto reductase family. As to quaternary structure, monomer.

Its subcellular location is the cytoplasm. It carries out the reaction hydroxyacetone + NADP(+) = methylglyoxal + NADPH + H(+). In terms of biological role, aldo-keto reductase that significantly contributes to cellular methylglyoxal detoxification by catalyzing the NADPH-dependent conversion of methylglyoxal to acetol. In Salmonella typhi, this protein is Putative methylglyoxal reductase DkgA.